Here is a 495-residue protein sequence, read N- to C-terminus: Leucine aminopeptidase 2 (495 aa).

The first 21 residues, 1-21 (MKTQLLSLGVALTAISQGVIA), serve as a signal peptide directing secretion. The PA domain occupies 124-218 (PPADKITAEL…ADGKNLASLV (95 aa)). 2 N-linked (GlcNAc...) asparagine glycosylation sites follow: asparagine 142 and asparagine 235. Positions 259 and 271 each coordinate Zn(2+). The N-linked (GlcNAc...) asparagine glycan is linked to asparagine 272. Glutamate 303 serves as the catalytic Proton acceptor. Residues glutamate 304 and aspartate 332 each coordinate Zn(2+). The N-linked (GlcNAc...) asparagine glycan is linked to asparagine 352. Position 430 (histidine 430) interacts with Zn(2+). The segment at 464 to 495 (GFPTRPKTGKRDVSPRGQSMPGGGCGHHSVFM) is disordered.

Belongs to the peptidase M28 family. M28A subfamily. As to quaternary structure, monomer. Zn(2+) is required as a cofactor.

It localises to the secreted. Its function is as follows. Extracellular aminopeptidase that releases a wide variety of amino acids from natural peptides and contributes to pathogenicity. In Arthroderma otae (strain ATCC MYA-4605 / CBS 113480) (Microsporum canis), this protein is Leucine aminopeptidase 2 (LAP2).